A 748-amino-acid chain; its full sequence is Polyribonucleotide nucleotidyltransferase (748 aa).

Aspartate 487 and aspartate 493 together coordinate Mg(2+). The 60-residue stretch at 554–613 (PSTTTIKIDKDKIRDIIGPGGKVIKEICETSGAKIDISDDGTVSVYASDRDKLKVALDKI) folds into the KH domain. Residues 623 to 691 (GEIFNGTVVK…NKGKAKLTIK (69 aa)) enclose the S1 motif domain. The interval 695 to 733 (KDKFSNNTKPKTSVNNTKDNSEPEQRHDSSKKRAWNEDN) is disordered. Over residues 699–712 (SNNTKPKTSVNNTK) the composition is skewed to polar residues. Residues 713–722 (DNSEPEQRHD) show a composition bias toward basic and acidic residues.

It belongs to the polyribonucleotide nucleotidyltransferase family. Mg(2+) is required as a cofactor.

The protein resides in the cytoplasm. It catalyses the reaction RNA(n+1) + phosphate = RNA(n) + a ribonucleoside 5'-diphosphate. Its function is as follows. Involved in mRNA degradation. Catalyzes the phosphorolysis of single-stranded polyribonucleotides processively in the 3'- to 5'-direction. The protein is Polyribonucleotide nucleotidyltransferase of Rickettsia rickettsii (strain Iowa).